We begin with the raw amino-acid sequence, 398 residues long: Succinate--CoA ligase [ADP-forming] subunit beta (398 aa).

An ATP-grasp domain is found at lysine 9 to glutamate 254. ATP contacts are provided by residues lysine 46, glycine 53–glycine 55, glutamate 109, alanine 112, and glutamate 117. Residues asparagine 209 and aspartate 223 each contribute to the Mg(2+) site. Substrate-binding positions include asparagine 274 and glycine 331 to methionine 333.

It belongs to the succinate/malate CoA ligase beta subunit family. As to quaternary structure, heterotetramer of two alpha and two beta subunits. Requires Mg(2+) as cofactor.

It carries out the reaction succinate + ATP + CoA = succinyl-CoA + ADP + phosphate. It catalyses the reaction GTP + succinate + CoA = succinyl-CoA + GDP + phosphate. The protein operates within carbohydrate metabolism; tricarboxylic acid cycle; succinate from succinyl-CoA (ligase route): step 1/1. Its function is as follows. Succinyl-CoA synthetase functions in the citric acid cycle (TCA), coupling the hydrolysis of succinyl-CoA to the synthesis of either ATP or GTP and thus represents the only step of substrate-level phosphorylation in the TCA. The beta subunit provides nucleotide specificity of the enzyme and binds the substrate succinate, while the binding sites for coenzyme A and phosphate are found in the alpha subunit. This is Succinate--CoA ligase [ADP-forming] subunit beta from Brucella abortus (strain S19).